The chain runs to 486 residues: BTB/POZ domain and ankyrin repeat-containing protein BOP (486 aa).

The BTB domain maps to 25–115 (SDVTFSVEGR…LYSGQVSIVP (91 aa)). A C2HC NPR-type zinc finger spans residues 121 to 135 (RPNCGERGCWHTHCS). The Zn(2+) site is built by Cys124, Cys129, His131, and Cys134. 4 ANK repeats span residues 257–286 (QKIR…LNLD), 287–316 (EALA…DVNY), 321–350 (AGKT…DPNV), and 354–388 (DNVT…KLRL). Disordered regions lie at residues 403–442 (EEGN…NHNI) and 464–486 (QMSD…HHDY). Low complexity-rich tracts occupy residues 406-418 (NANN…TTTT) and 432-442 (SSSSSGNNHNI). Basic and acidic residues predominate over residues 466–475 (SDDHGGRHGD).

The protein belongs to the plant 'ANKYRIN-BTB/POZ' family. 'NOOT-BOP-COCH-like' (NBCL) subfamily. As to quaternary structure, homodimer. In terms of tissue distribution, expressed in xylem vessels and parenchyma cells of pedicel vascular tissue in the abscission zone (AZ). Accumulates in developing root nodules and present in roots, especially in the upper part.

The protein resides in the nucleus. Its subcellular location is the cytoplasm. It is found in the cell membrane. It participates in protein modification; protein ubiquitination. Its function is as follows. May act as a substrate-specific adapter of an E3 ubiquitin-protein ligase complex (CUL3-RBX1-BTB) which mediates the ubiquitination and subsequent proteasomal degradation of target proteins. Transcriptional co-regulator involved in promoting the fate and determination of leaf and flower meristems. Required for the abscission of senescent organs, probably by regulating the cell wall disorganization in abscission zones (AZs, e.g. pulvini at the base of leaves). Involved in the coordination of the symbiotic nodule developmental program; promotes the formation of root nodules by interacting directly with APP1 to modulate the expression of the nuclear transcription factor Y subunit (NF-YA1), a key nodulin. Necessary for the robust maintenance of nodule identity throughout the nodule developmental program. This chain is BTB/POZ domain and ankyrin repeat-containing protein BOP, found in Lupinus luteus (European yellow lupine).